Here is a 250-residue protein sequence, read N- to C-terminus: uncharacterized protein (250 aa).

A helical membrane pass occupies residues Ile-2 to Phe-22.

The protein resides in the membrane. This is an uncharacterized protein from Acanthamoeba polyphaga (Amoeba).